The following is a 185-amino-acid chain: Ribosome-recycling factor (185 aa).

The protein belongs to the RRF family.

The protein resides in the cytoplasm. Responsible for the release of ribosomes from messenger RNA at the termination of protein biosynthesis. May increase the efficiency of translation by recycling ribosomes from one round of translation to another. The sequence is that of Ribosome-recycling factor from Streptococcus pyogenes serotype M18 (strain MGAS8232).